The primary structure comprises 487 residues: WD-40 repeat-containing protein MSI5 (487 aa).

Met1 is modified (N-acetylmethionine). The segment covering 1–12 (MESEAAATVQAT) has biased composition (low complexity). The segment at 1–44 (MESEAAATVQATRPRRAPRTPVTAILTDKRRRKPKSNNESQLPF) is disordered. The Nuclear localization signal motif lies at 14 to 21 (PRRAPRTP). WD repeat units lie at residues 142 to 182 (IHPG…DRYA), 197 to 237 (GHQD…TMAG), 270 to 310 (GHKD…SPAM), 315 to 355 (AHDA…SNGV), 364 to 404 (GHRA…KKSE), and 419 to 466 (GHRD…YRPE). Positions 236 to 268 (AGSDSKSPGSSFKQTGEGSDKTGGPSVGPRGIY) are disordered. Polar residues predominate over residues 237 to 252 (GSDSKSPGSSFKQTGE). A DWD box motif is present at residues 288 to 303 (FCSVGDDSCLMLWDAR).

This sequence belongs to the WD repeat RBAP46/RBAP48/MSI1 family. Interacts with AHL16. Interacts with LHP1, PDP2, PDP3 and PDP6. Component of the PRC2 (polycomb repressive complex 2) complex which regulates histone methylation on histone H3K27.

The protein resides in the nucleus. Its function is as follows. Core histone-binding subunit that may target chromatin assembly factors, chromatin remodeling factors and histone deacetylases to their histone substrates in a manner that is regulated by nucleosomal DNA. Acts together with PDP1 and MSI4/FVE to regulate the function of the PRC2 complex on FLC. In Arabidopsis thaliana (Mouse-ear cress), this protein is WD-40 repeat-containing protein MSI5.